The following is a 260-amino-acid chain: Snake venom serine protease homolog KN4 (260 aa).

The N-terminal stretch at 1–18 (MVLIRVLANLLILQLSYA) is a signal peptide. Residues 19–24 (QKSSEL) constitute a propeptide that is removed on maturation. Residues 25–251 (IIGGDECNIN…HLDWIQNIIA (227 aa)) enclose the Peptidase S1 domain. 6 cysteine pairs are disulfide-bonded: C31/C165, C52/C68, C100/C258, C144/C212, C176/C191, and C202/C227. N83, N123, N124, N156, and N172 each carry an N-linked (GlcNAc...) asparagine glycan. A glycan (N-linked (GlcNAc...) asparagine) is linked at N253.

The protein belongs to the peptidase S1 family. Snake venom subfamily. In terms of tissue distribution, expressed by the venom gland.

It is found in the secreted. Snake venom serine protease homolog that may act in the hemostasis system of the prey. The sequence is that of Snake venom serine protease homolog KN4 from Trimeresurus stejnegeri (Chinese green tree viper).